We begin with the raw amino-acid sequence, 65 residues long: Small ribosomal subunit protein eS17 (65 aa).

The protein belongs to the eukaryotic ribosomal protein eS17 family.

This Archaeoglobus fulgidus (strain ATCC 49558 / DSM 4304 / JCM 9628 / NBRC 100126 / VC-16) protein is Small ribosomal subunit protein eS17.